A 504-amino-acid chain; its full sequence is Maturase K (504 aa).

It belongs to the intron maturase 2 family. MatK subfamily.

It localises to the plastid. Its subcellular location is the chloroplast. Functionally, usually encoded in the trnK tRNA gene intron. Probably assists in splicing its own and other chloroplast group II introns. The chain is Maturase K from Thlaspi arvense (Field penny-cress).